Reading from the N-terminus, the 207-residue chain is Large ribosomal subunit protein uL4 (207 aa).

Residues 45 to 89 form a disordered region; sequence RQGTHKVKTRSEVRGGGRKPWRQKGTGRARQGSIRSPQWRGGGTV. A compositionally biased stretch (basic residues) spans 60 to 71; it reads GGRKPWRQKGTG.

It belongs to the universal ribosomal protein uL4 family. As to quaternary structure, part of the 50S ribosomal subunit.

One of the primary rRNA binding proteins, this protein initially binds near the 5'-end of the 23S rRNA. It is important during the early stages of 50S assembly. It makes multiple contacts with different domains of the 23S rRNA in the assembled 50S subunit and ribosome. Functionally, forms part of the polypeptide exit tunnel. The chain is Large ribosomal subunit protein uL4 from Bacillus mycoides (strain KBAB4) (Bacillus weihenstephanensis).